The following is a 170-amino-acid chain: Nicotinamide-nucleotide adenylyltransferase (170 aa).

It belongs to the archaeal NMN adenylyltransferase family.

It localises to the cytoplasm. It carries out the reaction beta-nicotinamide D-ribonucleotide + ATP + H(+) = diphosphate + NAD(+). Its pathway is cofactor biosynthesis; NAD(+) biosynthesis; NAD(+) from nicotinamide D-ribonucleotide: step 1/1. The sequence is that of Nicotinamide-nucleotide adenylyltransferase from Methanothrix thermoacetophila (strain DSM 6194 / JCM 14653 / NBRC 101360 / PT) (Methanosaeta thermophila).